The sequence spans 121 residues: UPF0102 protein DSY2577 (121 aa).

Belongs to the UPF0102 family.

This chain is UPF0102 protein DSY2577, found in Desulfitobacterium hafniense (strain Y51).